Reading from the N-terminus, the 382-residue chain is Mannitol-1-phosphate 5-dehydrogenase (382 aa).

An NAD(+)-binding site is contributed by 3 to 14 (ALHFGAGNIGRG).

This sequence belongs to the mannitol dehydrogenase family.

The enzyme catalyses D-mannitol 1-phosphate + NAD(+) = beta-D-fructose 6-phosphate + NADH + H(+). This Pectobacterium atrosepticum (strain SCRI 1043 / ATCC BAA-672) (Erwinia carotovora subsp. atroseptica) protein is Mannitol-1-phosphate 5-dehydrogenase.